A 142-amino-acid polypeptide reads, in one-letter code: ATP synthase epsilon chain (142 aa).

Belongs to the ATPase epsilon chain family. As to quaternary structure, F-type ATPases have 2 components, CF(1) - the catalytic core - and CF(0) - the membrane proton channel. CF(1) has five subunits: alpha(3), beta(3), gamma(1), delta(1), epsilon(1). CF(0) has three main subunits: a, b and c.

Its subcellular location is the cell inner membrane. Produces ATP from ADP in the presence of a proton gradient across the membrane. The protein is ATP synthase epsilon chain of Histophilus somni (strain 2336) (Haemophilus somnus).